The chain runs to 327 residues: Succinylglutamate desuccinylase (327 aa).

His-53, Glu-56, and His-146 together coordinate Zn(2+). The active site involves Glu-209.

This sequence belongs to the AspA/AstE family. Succinylglutamate desuccinylase subfamily. Zn(2+) serves as cofactor.

It carries out the reaction N-succinyl-L-glutamate + H2O = L-glutamate + succinate. Its pathway is amino-acid degradation; L-arginine degradation via AST pathway; L-glutamate and succinate from L-arginine: step 5/5. Functionally, transforms N(2)-succinylglutamate into succinate and glutamate. This is Succinylglutamate desuccinylase from Serratia proteamaculans (strain 568).